We begin with the raw amino-acid sequence, 195 residues long: Probable molybdenum cofactor guanylyltransferase (195 aa).

Residues 9–11, lysine 21, aspartate 69, and aspartate 100 each bind GTP; that span reads LAG. Mg(2+) is bound at residue aspartate 100.

This sequence belongs to the MobA family. Mg(2+) is required as a cofactor.

The protein resides in the cytoplasm. It carries out the reaction Mo-molybdopterin + GTP + H(+) = Mo-molybdopterin guanine dinucleotide + diphosphate. Functionally, transfers a GMP moiety from GTP to Mo-molybdopterin (Mo-MPT) cofactor (Moco or molybdenum cofactor) to form Mo-molybdopterin guanine dinucleotide (Mo-MGD) cofactor. This chain is Probable molybdenum cofactor guanylyltransferase, found in Geobacillus sp. (strain WCH70).